The following is a 454-amino-acid chain: tRNA modification GTPase MnmE (454 aa).

The (6S)-5-formyl-5,6,7,8-tetrahydrofolate site is built by arginine 23, glutamate 80, and lysine 120. Residues 216–377 (GMKVVIAGRP…LRNHLKQSMG (162 aa)) form the TrmE-type G domain. Position 226 (asparagine 226) interacts with K(+). GTP-binding positions include 226–231 (NAGKSS), 245–251 (TDIAGTT), 270–273 (DTAG), 335–338 (NKAD), and 358–360 (SAR). Serine 230 is a Mg(2+) binding site. Residues threonine 245, isoleucine 247, and threonine 250 each coordinate K(+). Position 251 (threonine 251) interacts with Mg(2+). Residue lysine 454 participates in (6S)-5-formyl-5,6,7,8-tetrahydrofolate binding.

It belongs to the TRAFAC class TrmE-Era-EngA-EngB-Septin-like GTPase superfamily. TrmE GTPase family. As to quaternary structure, homodimer. Heterotetramer of two MnmE and two MnmG subunits. K(+) serves as cofactor.

It is found in the cytoplasm. In terms of biological role, exhibits a very high intrinsic GTPase hydrolysis rate. Involved in the addition of a carboxymethylaminomethyl (cmnm) group at the wobble position (U34) of certain tRNAs, forming tRNA-cmnm(5)s(2)U34. In Klebsiella pneumoniae (strain 342), this protein is tRNA modification GTPase MnmE.